A 225-amino-acid polypeptide reads, in one-letter code: Probable manganese catalase (225 aa).

Glutamate 37 is a binding site for Mn(2+). Aspartate 58 and aspartate 62 together coordinate Ca(2+). Positions 67, 70, 138, and 171 each coordinate Mn(2+). Serine 204 contacts Ca(2+). Residues 204 to 225 (STPGRYVQDPNPTEPSFSNPRR) form a disordered region. Polar residues predominate over residues 213 to 225 (PNPTEPSFSNPRR).

The protein belongs to the manganese catalase family. The cofactor is Ca(2+). It depends on Mn(2+) as a cofactor.

The catalysed reaction is 2 H2O2 = O2 + 2 H2O. Its function is as follows. Catalyzes the decomposition of hydrogen peroxide into water and oxygen. This is Probable manganese catalase from Clostridium acetobutylicum (strain ATCC 824 / DSM 792 / JCM 1419 / IAM 19013 / LMG 5710 / NBRC 13948 / NRRL B-527 / VKM B-1787 / 2291 / W).